The chain runs to 396 residues: Beta-peptidyl aminopeptidase BapA (396 aa).

An N-terminal signal peptide occupies residues 1-21; the sequence is MHYLKFPAIIAGMLLAGAASA. Ser271 serves as the catalytic Nucleophile. Residues Ser309 and Asp311 each act as proton donor/acceptor in the active site.

The protein belongs to the peptidase S58 family. As to quaternary structure, heterooctamer of 4 heterodimers ((alpha:beta)4); each heterodimer is composed of an alpha subunit and a beta subunit processed from the same precursor. In terms of processing, autoproteolytic processing to generate the alpha and beta subunit is required for self-activation and is proposed to use a similar mechanism as substrate cleavage.

It localises to the periplasm. It catalyses the reaction Cleaves N-terminal beta-homoamino acids from peptides composed of 2 to 6 amino acids.. Inhibited by AEBSF (4-(2-aminoethyl)benzenesulfonyl fluoride, Pefabloc SC). Beta-aminopeptidase that can cleave synthetic beta-peptides which consist of backbone-elongated beta-amino acid residues that are not processed by common proteolytic enzymes. Can cleave the beta-peptides beta-homoVal-beta-homoAla-beta-homoLeu and beta-homoAla-beta-homoLeu. Requires a beta-amino acid at the N-terminus of peptide substrates and cleaves the peptide bond between the N-terminal beta-amino acid and the amino acid at the second position of tripeptidic substrates of the general structure H-betahXaa-Ile-betahTyr-OH according to the following preferences with regard to the side chain of the N-terminal beta-amino acid: aliphatic and aromatic &gt; OH-containing &gt; hydrogen, basic and polar. beta-homoVal-beta-homoAla-beta-homoLeu and beta-homoAla-beta-homoLeu. This is Beta-peptidyl aminopeptidase BapA from Sphingosinicella microcystinivorans.